The chain runs to 632 residues: Probable membrane transporter protein MamO (632 aa).

A helical membrane pass occupies residues 25-45; sequence APVSILAFLILVTFAWGAYLL. The segment at 78-268 is protease-like; sequence LYYTVPPAVV…VIVSHLQDVV (191 aa). Residues H148 and H263 each coordinate a divalent metal cation. The next 7 helical transmembrane spans lie at 340 to 360, 412 to 432, 434 to 454, 513 to 533, 550 to 570, 582 to 602, and 612 to 632; these read IGGYSIADILGLGMLALAAGV, LVQWDKVKPLIPWGVAGVVIG, FIGNAIGDSVVGVLLGLFALI, AVLGLPMGLFSGILGISGGVI, IANSSVLVFWASVAGSVVAFI, APVTLALVMIPGAYVGGILGA, and VLKGIYAATMAAIAIKMLTTV. The TSUP-like stretch occupies residues 365–632; it reads MTMGGGVLQV…AIAIKMLTTV (268 aa).

The protein in the N-terminal section; belongs to the peptidase S1C family. It in the C-terminal section; belongs to the 4-toluene sulfonate uptake permease (TSUP) (TC 2.A.102) family. The cofactor is a metal cation. Subject to proteolytic cleavage by MamE.

The protein resides in the magnetosome membrane. In terms of biological role, plays 2 roles; promotes magnetite nucleation/formation and activates the MamE protease. Despite its near conservation of a protease-like sequence, this is probably not a protease. Required in conjunction with MamP for proteolysis of at least MamE, itself and MamP. May transport a solute that controls MamE's protease activity. May place individual iron atoms into the magnetite lattice. One of 7 genes (mamLQBIEMO) able to induce magnetosome membrane biogenesis; coexpression of mamLQRBIEMO in a deletion of the 17 gene mamAB operon restores magnetosome vesicle formation but not magnetite biosynthesis. This is Probable membrane transporter protein MamO from Magnetospirillum gryphiswaldense (strain DSM 6361 / JCM 21280 / NBRC 15271 / MSR-1).